Consider the following 2227-residue polypeptide: Genome polyprotein (2227 aa).

2 short sequence motifs ((L)YPX(n)L motif) span residues 167-171 and 200-205; these read YPHGL and YPVWEL. The segment at 766-836 is involved in P1-2A pentamerization; that stretch reads MMSRIAAGDL…PRKMKGLFSQ (71 aa). Residues 1011–1031 form a helical membrane-spanning segment; the sequence is TVEIINTVLCFVKSGILLYVI. Positions 1043–1070 are membrane-penetrating ability; sequence IGLLRVMNYADIGCSVISCGKVFSKMLE. A coiled-coil region spans residues 1127 to 1152; the sequence is KKKDILNILKDNQQKIEKAIEEADNF. The region spanning 1204-1366 is the SF3 helicase domain; sequence HQKLKNLGSI…SFFKNPHNDM (163 aa). 1230 to 1237 contributes to the ATP binding site; that stretch reads GKRGGGKS. A helical membrane pass occupies residues 1462 to 1482; sequence WVAVGAAVGILGVLVGGWFVY. O-(5'-phospho-RNA)-tyrosine is present on Tyr1499. A Peptidase C3 domain is found at 1514–1728; the sequence is DPVESQSTLE…VAKLVTQEMF (215 aa). Active-site for protease 3C activity residues include His1563, Asp1603, and Cys1691. The 122-residue stretch at 1976-2097 folds into the RdRp catalytic domain; the sequence is DVGLDLDFSA…VFSRDVQIDN (122 aa).

Belongs to the picornaviridae polyprotein family. In terms of assembly, homodimer. Homomultimer; probably interacts with membranes in a multimeric form. Seems to assemble into amyloid-like fibers. As to quaternary structure, homodimer. Monomer. Interacts with protein 3CD. Interacts with host ACBD3. In terms of assembly, interacts with protein 3AB. As to quaternary structure, interacts with human MAVS. Homodimer; disulfide-linked. In terms of assembly, homopentamer. Homooligomer. As to quaternary structure, interacts with capsid protein VP2. Interacts with capsid protein VP3. Interacts with capsid protein VP1. Interacts with capsid protein VP3. In terms of assembly, interacts with capsid protein VP1. Interacts with capsid protein VP2. Specific enzymatic cleavages by viral protease in vivo yield a variety of precursors and mature proteins. Polyprotein processing intermediates are produced, such as P1-2A which is a functional precursor of the structural proteins, VP0 which is a VP4-VP2 precursor, VP1-2A precursor, 3ABC precursor which is a stable and catalytically active precursor of 3A, 3B and 3C proteins, 3AB and 3CD precursors. The assembly signal 2A is removed from VP1-2A by a host protease, possibly host Cathepsin L. This cleavage occurs over a region of 3 amino-acids probably generating VP1 proteins with heterogeneous C-termini. In terms of processing, during virion maturation, immature virions are rendered infectious following cleavage of VP0 into VP4 and VP2. This maturation seems to be an autocatalytic event triggered by the presence of RNA in the capsid and is followed by a conformational change of the particle. Post-translationally, the assembly signal 2A is removed from VP1-2A by a host protease, possibly host Cathepsin L in naked virions. This cleavage does not occur in enveloped virions. This cleavage occurs over a region of 3 amino-acids probably generating VP1 proteins with heterogeneous C-termini. VPg is uridylylated prior to priming replication into VPg-pUpU. In terms of processing, unlike other picornaviruses, does not seem to be myristoylated.

It localises to the virion. The protein resides in the host endosome. It is found in the host multivesicular body. Its subcellular location is the host membrane. The protein localises to the host mitochondrion outer membrane. It localises to the host cytoplasm. The protein resides in the host cytoplasmic vesicle membrane. The enzyme catalyses RNA(n) + a ribonucleoside 5'-triphosphate = RNA(n+1) + diphosphate. It carries out the reaction a ribonucleoside 5'-triphosphate + H2O = a ribonucleoside 5'-diphosphate + phosphate + H(+). The catalysed reaction is Selective cleavage of Gln-|-Gly bond in the poliovirus polyprotein. In other picornavirus reactions Glu may be substituted for Gln, and Ser or Thr for Gly.. Its function is as follows. Capsid proteins VP1, VP2, and VP3 form a closed capsid enclosing the viral positive strand RNA genome. All these proteins contain a beta-sheet structure called beta-barrel jelly roll. Together they form an icosahedral capsid (T=3) composed of 60 copies of each VP1, VP2, and VP3, with a diameter of approximately 300 Angstroms. VP1 is situated at the 12 fivefold axes, whereas VP2 and VP3 are located at the quasi-sixfold axes. The naked capsid interacts with the host receptor HAVCR1 to provide virion attachment to and probably entry into the target cell. In terms of biological role, VP0 precursor is a component of the immature procapsids. Plays a role in the assembly of the 12 pentamers into an icosahedral structure. Has not been detected in mature virions, supposedly owing to its small size. Functionally, precursor component of immature procapsids that corresponds to an extended form of the structural protein VP1. After maturation, possibly by the host Cathepsin L, the assembly signal 2A is cleaved to give rise to the mature VP1 protein. Its function is as follows. Functions as a viroporin. Affects membrane integrity and causes an increase in membrane permeability. Involved in host intracellular membrane rearrangements probably to give rise to the viral factories. Does not disrupt calcium homeostasis or glycoprotein trafficking. Antagonizes the innate immune response of the host by suppressing IFN-beta synthesis, which it achieves by interfering with the RIG-I/IFIH1 pathway. In terms of biological role, affects membrane integrity and causes an increase in membrane permeability. Associates with and induces structural rearrangements of intracellular membranes. Displays RNA-binding activity. Functionally, the precursor 3ABC is targeted to the mitochondrial membrane where protease 3C activity cleaves and inhibits the host antiviral protein MAVS, thereby disrupting activation of IRF3 through the IFIH1/MDA5 pathway. In vivo, the protease activity of 3ABC precursor is more efficient in cleaving the 2BC precursor than that of protein 3C. The 3ABC precursor may therefore play a role in the proteolytic processing of the polyprotein. Possible viroporin. Its function is as follows. Interacts with the 3CD precursor and with RNA structures found at both the 5'- and 3'-termini of the viral genome. Since the 3AB precursor contains the hydrophobic domain 3A, it probably anchors the whole viral replicase complex to intracellular membranes on which viral RNA synthesis occurs. In terms of biological role, may serve as membrane anchor to the 3AB and 3ABC precursors via its hydrophobic domain. May interact with RNA. Acts as a primer for viral RNA replication and remains covalently bound to viral genomic RNA. VPg is uridylylated prior to priming replication into VPg-pUpU. The VPg-pUpU is then used as primer on the genomic RNA poly(A) by the RNA-dependent RNA polymerase to replicate the viral genome. Functionally, cysteine protease that generates mature viral proteins from the precursor polyprotein. In addition to its proteolytic activity, it binds to viral RNA, and thus influences viral genome replication. RNA and substrate bind cooperatively to the protease. Cleaves IKBKG/NEMO to impair innate immune signaling. Cleaves host PABPC1 which may participate in the switch of viral translation to RNA synthesis. Its function is as follows. Interacts with the 3AB precursor and with RNA structures found at both the 5'- and 3'-termini of the viral genome. Disrupts TLR3 signaling by degrading the host adapter protein TICAM1/TRIF. In terms of biological role, RNA-directed RNA polymerase 3D-POL replicates genomic and antigenomic RNA by recognizing replications specific signals. This Human hepatitis A virus genotype IA (isolate H2) (HHAV) protein is Genome polyprotein.